Consider the following 501-residue polypeptide: Phenylalanine--tRNA ligase alpha subunit (501 aa).

L-phenylalanine is bound by residues Thr344, 383-385, and Phe424; that span reads QID. Glu426 is a binding site for Mg(2+). Position 449 (Phe449) interacts with L-phenylalanine.

It belongs to the class-II aminoacyl-tRNA synthetase family. Phe-tRNA synthetase alpha subunit type 2 subfamily. Tetramer of two alpha and two beta subunits. The cofactor is Mg(2+).

The protein localises to the cytoplasm. The enzyme catalyses tRNA(Phe) + L-phenylalanine + ATP = L-phenylalanyl-tRNA(Phe) + AMP + diphosphate + H(+). The polypeptide is Phenylalanine--tRNA ligase alpha subunit (Thermococcus kodakarensis (strain ATCC BAA-918 / JCM 12380 / KOD1) (Pyrococcus kodakaraensis (strain KOD1))).